The following is a 177-amino-acid chain: Chorismate pyruvate-lyase (177 aa).

Residues M37, R79, L117, and E159 each contribute to the substrate site.

This sequence belongs to the UbiC family. Monomer.

Its subcellular location is the cytoplasm. The enzyme catalyses chorismate = 4-hydroxybenzoate + pyruvate. Its pathway is cofactor biosynthesis; ubiquinone biosynthesis. Its function is as follows. Removes the pyruvyl group from chorismate, with concomitant aromatization of the ring, to provide 4-hydroxybenzoate (4HB) for the ubiquinone pathway. The polypeptide is Chorismate pyruvate-lyase (Sodalis glossinidius (strain morsitans)).